We begin with the raw amino-acid sequence, 119 residues long: Holo-[acyl-carrier-protein] synthase (119 aa).

Residues Asp8 and Glu60 each contribute to the Mg(2+) site.

This sequence belongs to the P-Pant transferase superfamily. AcpS family. Requires Mg(2+) as cofactor.

It localises to the cytoplasm. It carries out the reaction apo-[ACP] + CoA = holo-[ACP] + adenosine 3',5'-bisphosphate + H(+). Its function is as follows. Transfers the 4'-phosphopantetheine moiety from coenzyme A to a Ser of acyl-carrier-protein. The protein is Holo-[acyl-carrier-protein] synthase of Mycoplasma pneumoniae (strain ATCC 29342 / M129 / Subtype 1) (Mycoplasmoides pneumoniae).